Consider the following 212-residue polypeptide: Uridine kinase (212 aa).

ATP is bound at residue 13 to 20; it reads GASASGKS.

Belongs to the uridine kinase family.

The protein localises to the cytoplasm. The enzyme catalyses uridine + ATP = UMP + ADP + H(+). It catalyses the reaction cytidine + ATP = CMP + ADP + H(+). The protein operates within pyrimidine metabolism; CTP biosynthesis via salvage pathway; CTP from cytidine: step 1/3. It functions in the pathway pyrimidine metabolism; UMP biosynthesis via salvage pathway; UMP from uridine: step 1/1. The polypeptide is Uridine kinase (Shewanella oneidensis (strain ATCC 700550 / JCM 31522 / CIP 106686 / LMG 19005 / NCIMB 14063 / MR-1)).